The sequence spans 196 residues: Late protein I196L (196 aa).

2 tandem repeats follow at residues 28–48 (SNYLTTAIANNTSISPTTSSN) and 49–68 (HITTAIPNNTSILPTTSSNH). One copy of the 3; approximate repeat lies at 69-87 (ITTAISNNITDKDDYTHFS).

The protein belongs to the asfivirus I196L family.

The sequence is that of Late protein I196L from Ornithodoros (relapsing fever ticks).